Here is an 888-residue protein sequence, read N- to C-terminus: Alanine--tRNA ligase (888 aa).

Residues His564, His568, Cys676, and His680 each contribute to the Zn(2+) site.

The protein belongs to the class-II aminoacyl-tRNA synthetase family. Zn(2+) is required as a cofactor.

The protein resides in the cytoplasm. It catalyses the reaction tRNA(Ala) + L-alanine + ATP = L-alanyl-tRNA(Ala) + AMP + diphosphate. Functionally, catalyzes the attachment of alanine to tRNA(Ala) in a two-step reaction: alanine is first activated by ATP to form Ala-AMP and then transferred to the acceptor end of tRNA(Ala). Also edits incorrectly charged Ser-tRNA(Ala) and Gly-tRNA(Ala) via its editing domain. The protein is Alanine--tRNA ligase of Bartonella tribocorum (strain CIP 105476 / IBS 506).